A 60-amino-acid polypeptide reads, in one-letter code: UPF0434 protein PM0859 (60 aa).

This sequence belongs to the UPF0434 family.

This is UPF0434 protein PM0859 from Pasteurella multocida (strain Pm70).